Consider the following 1531-residue polypeptide: La-related protein Larp4B (1531 aa).

The segment covering 112 to 147 (HTHVAHQQQQQQQQQTIQQHLHQQQQQQSPHPAQHL) has biased composition (low complexity). 2 disordered regions span residues 112 to 148 (HTHVAHQQQQQQQQQTIQQHLHQQQQQQSPHPAQHLT) and 239 to 263 (QLPANGSADPQQGSHNAAGGEEPNI). The HTH La-type RNA-binding domain occupies 262–351 (NIPLDKLKQM…RPNRKRCIII (90 aa)). The RRM domain occupies 348–423 (CIIILREISN…KPIMARIKPK (76 aa)). Disordered regions lie at residues 533 to 605 (PLPP…QGGN), 710 to 736 (AHSHHLQAQQQLQGQTQQQHYQLASSS), 748 to 768 (TAPAPQQPGQHQHHLVVQQTQ), 791 to 1135 (QEAG…SNQQ), 1160 to 1211 (DVVR…TPAL), and 1251 to 1285 (ASSKEEAAGAQQQQQQQLDKSNKTEDEMHPKQPSQ). Residues 565–578 (YNNNHRGNPNNVGG) are compositionally biased toward low complexity. Composition is skewed to low complexity over residues 754 to 768 (QPGQHQHHLVVQQTQ) and 810 to 826 (SSNMSASSSSSLATSMS). Residues 860–884 (SSPSNPHPQQHLMSSSTGSNVQSAG) show a composition bias toward polar residues. The segment covering 945–959 (ALSSQQQQHHLTTGT) has biased composition (low complexity). Residues 966-975 (HHYHHHHHHN) show a composition bias toward basic residues. Residues 983–1004 (NSGGLGVSSGGSGGGGSGGGSG) show a composition bias toward gly residues. Over residues 1031–1045 (HQQQQQQQQQQQQQQ) the composition is skewed to low complexity. Polar residues predominate over residues 1068–1086 (TSATAPHTPQATGGASLHN). Positions 1087–1115 (STTSSSSSTGLGQKQTLHQQQQQAPQQHQ) are enriched in low complexity. Ser-1123 carries the phosphoserine modification. Over residues 1164–1173 (TGGGGGGGGK) the composition is skewed to gly residues. Positions 1183–1200 (PQGQNQPHMAPNYQQHQP) are enriched in polar residues. Positions 1270 to 1280 (KSNKTEDEMHP) are enriched in basic and acidic residues. Residues Ser-1370 and Ser-1413 each carry the phosphoserine modification. 2 disordered regions span residues 1393-1418 (KAAASSDSKETGSGGSTGTLSPTGSH) and 1450-1531 (GGAS…ANNS). Polar residues-rich tracts occupy residues 1467-1477 (ATNTTQGSSAV) and 1502-1515 (QHYGSATEHNTNAN).

Its function is as follows. Probable RNA binding protein. Negatively regulates myc at the protein level, via an unknown mechanism, and may therefore have a role in growth. Has no effect on myc mRNA levels. The polypeptide is La-related protein Larp4B (Drosophila melanogaster (Fruit fly)).